The following is a 262-amino-acid chain: MSNKKLIINADDFGYTPAVTQGIIEAHKRGVVTSTTALPTSPYFLEAMESARISAPTLAIGVHLTLTLNQAKPILPREMVPSLVDEAGYFWHQSIFEEKVNLEEVYNEWDAQIISFMKSGRRPDHIDSHHNVHGKNKKLLGVALALARKYQLPLRNASRSIETKDYLELYQDVRTPDEMLYQFYDKAISTETILQLLDMVVCSEGEVFEINCHPAFIDTILQNQSGYCMPRIREVEILTSQEVKEAIEERGILLANYESLAM.

His129 is a binding site for Mg(2+).

This sequence belongs to the YdjC deacetylase family. Homodimer. It depends on Mg(2+) as a cofactor.

Probably catalyzes the deacetylation of acetylated carbohydrates an important step in the degradation of oligosaccharides. The polypeptide is Carbohydrate deacetylase (Enterococcus faecalis (strain ATCC 700802 / V583)).